The sequence spans 1563 residues: Integrator complex subunit 5-like protein (1563 aa).

2 stretches are compositionally biased toward basic and acidic residues: residues 1–21 (MKEE…RNDN) and 31–44 (EDWR…KNEN). 3 disordered regions span residues 1 to 63 (MKEE…YDDD), 102 to 208 (KKSK…NITY), and 270 to 310 (NSLN…QQNP). The span at 52-63 (GDSDDDDYYDDD) shows a compositional bias: acidic residues. Composition is skewed to low complexity over residues 109–133 (TAAT…TATA) and 141–202 (NNLL…NNNN). A helical membrane pass occupies residues 350-370 (DSIINWSLSTLTIITRLLIIL). The segment covering 381 to 398 (QQQQQQQQQQQQQQQQQQ) has biased composition (low complexity). Disordered regions lie at residues 381–417 (QQQQ…RQPI), 466–498 (SKSS…SSKT), 637–694 (FDNN…DNSS), and 784–828 (ILNN…SQEI). Over residues 405–414 (FPPPPPPPLR) the composition is skewed to pro residues. Composition is skewed to low complexity over residues 468 to 496 (SSSS…SSSS), 639 to 686 (NNNN…NNNN), and 786 to 824 (NNNN…QQQQ). The chain crosses the membrane as a helical span at residues 877–897 (IIIKLISLIGMDSIYSSLIIL). 2 disordered regions span residues 1154 to 1173 (SGNF…DEYG) and 1268 to 1303 (KQRM…DQNE). Residues 1160 to 1172 (GDDDDDEYGDDEY) show a composition bias toward acidic residues. Residues 1277 to 1288 (SIQQNGNINNEQ) are compositionally biased toward low complexity. Residues 1289–1303 (QQEEDDNDDADDQNE) show a composition bias toward acidic residues.

It belongs to the Integrator subunit 5 family. Component of the Integrator complex. The core complex associates with protein phosphatase 2A subunits, to form the Integrator-PP2A (INTAC) complex.

The protein localises to the nucleus. The protein resides in the cytoplasm. It localises to the nucleus membrane. Its function is as follows. Component of the integrator complex, a multiprotein complex that terminates RNA polymerase II (Pol II) transcription in the promoter-proximal region of genes. The integrator complex provides a quality checkpoint during transcription elongation by driving premature transcription termination of transcripts that are unfavorably configured for transcriptional elongation: the complex terminates transcription by (1) catalyzing dephosphorylation of the C-terminal domain (CTD) of Pol II subunit polr2a, (2) degrading the exiting nascent RNA transcript via endonuclease activity and (3) promoting the release of Pol II from bound DNA. The integrator complex is also involved in terminating the synthesis of non-coding Pol II transcripts, such as enhancer RNAs (eRNAs), small nuclear RNAs (snRNAs), telomerase RNAs and long non-coding RNAs (lncRNAs). This Dictyostelium discoideum (Social amoeba) protein is Integrator complex subunit 5-like protein.